We begin with the raw amino-acid sequence, 370 residues long: tRNA-specific 2-thiouridylase MnmA (370 aa).

Residues 8 to 15 (GMSGGVDS) and Met-34 contribute to the ATP site. Residues 104-106 (NPD) form an interaction with target base in tRNA region. Cys-109 serves as the catalytic Nucleophile. A disulfide bridge connects residues Cys-109 and Cys-202. Residue Gly-134 coordinates ATP. Positions 152–154 (KDQ) are interaction with tRNA. The Cysteine persulfide intermediate role is filled by Cys-202. The tract at residues 309-310 (RY) is interaction with tRNA.

This sequence belongs to the MnmA/TRMU family.

Its subcellular location is the cytoplasm. It catalyses the reaction S-sulfanyl-L-cysteinyl-[protein] + uridine(34) in tRNA + AH2 + ATP = 2-thiouridine(34) in tRNA + L-cysteinyl-[protein] + A + AMP + diphosphate + H(+). Functionally, catalyzes the 2-thiolation of uridine at the wobble position (U34) of tRNA, leading to the formation of s(2)U34. This chain is tRNA-specific 2-thiouridylase MnmA, found in Metamycoplasma arthritidis (strain 158L3-1) (Mycoplasma arthritidis).